A 183-amino-acid chain; its full sequence is Glutathione-regulated potassium-efflux system ancillary protein KefG (183 aa).

The protein belongs to the NAD(P)H dehydrogenase (quinone) family. KefG subfamily. Interacts with KefB.

It is found in the cell inner membrane. The enzyme catalyses a quinone + NADH + H(+) = a quinol + NAD(+). It carries out the reaction a quinone + NADPH + H(+) = a quinol + NADP(+). Regulatory subunit of a potassium efflux system that confers protection against electrophiles. Required for full activity of KefB. This is Glutathione-regulated potassium-efflux system ancillary protein KefG from Salmonella paratyphi B (strain ATCC BAA-1250 / SPB7).